Consider the following 322-residue polypeptide: ATP-dependent 6-phosphofructokinase (322 aa).

Residue Gly-13 participates in ATP binding. Residue 23-27 coordinates ADP; it reads RAVVR. ATP contacts are provided by residues 74–75 and 104–107; these read RC and GDGS. Mg(2+) is bound at residue Asp-105. 127-129 lines the substrate pocket; that stretch reads TID. Residue Asp-129 is the Proton acceptor of the active site. ADP is bound at residue Arg-156. Substrate-binding positions include Arg-164 and 171 to 173; that span reads MGR. ADP-binding positions include 187 to 189 and 215 to 217; these read GAE and KRH. Substrate-binding positions include Glu-224, Arg-246, and 252–255; that span reads HIQR.

It belongs to the phosphofructokinase type A (PFKA) family. ATP-dependent PFK group I subfamily. Prokaryotic clade 'B1' sub-subfamily. As to quaternary structure, homotetramer. It depends on Mg(2+) as a cofactor.

The protein resides in the cytoplasm. It catalyses the reaction beta-D-fructose 6-phosphate + ATP = beta-D-fructose 1,6-bisphosphate + ADP + H(+). The protein operates within carbohydrate degradation; glycolysis; D-glyceraldehyde 3-phosphate and glycerone phosphate from D-glucose: step 3/4. With respect to regulation, allosterically activated by ADP and other diphosphonucleosides, and allosterically inhibited by phosphoenolpyruvate. In terms of biological role, catalyzes the phosphorylation of D-fructose 6-phosphate to fructose 1,6-bisphosphate by ATP, the first committing step of glycolysis. The sequence is that of ATP-dependent 6-phosphofructokinase from Paenibacillus macquariensis (Bacillus macquariensis).